Consider the following 457-residue polypeptide: Multidrug resistance protein MdtK (457 aa).

The next 12 membrane-spanning stretches (helical) occupy residues 11 to 31, 53 to 73, 93 to 113, 127 to 147, 160 to 180, 191 to 211, 243 to 263, 276 to 296, 316 to 336, 350 to 370, 387 to 407, and 418 to 438; these read LLAL…MGFV, IWLP…PVVA, WLAG…GYII, AVGY…FQVA, GMVM…IFIY, VGCG…MLWW, LPIA…ALLV, IALN…AAVT, RTGV…TVLM, VVLL…SDSI, IFFI…YLLA, and PAGF…MMML.

The protein belongs to the multi antimicrobial extrusion (MATE) (TC 2.A.66.1) family. MdtK subfamily.

The protein localises to the cell inner membrane. Functionally, multidrug efflux pump that functions probably as a Na(+)/drug antiporter. The protein is Multidrug resistance protein MdtK of Klebsiella pneumoniae (strain 342).